The following is a 434-amino-acid chain: Alpha-enolase (434 aa).

A Mg(2+)-binding site is contributed by Ser40. Substrate-binding residues include His158 and Glu167. The active-site Proton donor is Glu210. Positions 245, 293, and 318 each coordinate Mg(2+). Substrate contacts are provided by Glu293 and Asp318. The active-site Proton acceptor is the Lys343. Residues 370 to 373 (SHRS) and Lys394 contribute to the substrate site.

Belongs to the enolase family. As to quaternary structure, homodimer. Requires Mg(2+) as cofactor.

It is found in the cytoplasm. The enzyme catalyses (2R)-2-phosphoglycerate = phosphoenolpyruvate + H2O. The protein operates within carbohydrate degradation; glycolysis; pyruvate from D-glyceraldehyde 3-phosphate: step 4/5. The polypeptide is Alpha-enolase (Sceloporus undulatus (Eastern fence lizard)).